The primary structure comprises 329 residues: L-lactate dehydrogenase (329 aa).

NAD(+)-binding positions include valine 18, glutamate 39, lysine 46, tyrosine 71, and 85–86; that span reads GA. 2 residues coordinate substrate: glutamine 88 and arginine 94. Residues serine 107, 124–126, and serine 149 each bind NAD(+); that span reads AAN. 126 to 129 serves as a coordination point for substrate; the sequence is NPVD. Residue 154–157 coordinates substrate; it reads DSAR. The beta-D-fructose 1,6-bisphosphate site is built by arginine 159 and histidine 174. Histidine 181 acts as the Proton acceptor in catalysis. Tyrosine 226 is modified (phosphotyrosine). Residue threonine 235 coordinates substrate.

Belongs to the LDH/MDH superfamily. LDH family. As to quaternary structure, homotetramer.

The protein resides in the cytoplasm. It catalyses the reaction (S)-lactate + NAD(+) = pyruvate + NADH + H(+). The protein operates within fermentation; pyruvate fermentation to lactate; (S)-lactate from pyruvate: step 1/1. With respect to regulation, allosterically activated by fructose 1,6-bisphosphate (FBP). In terms of biological role, catalyzes the conversion of lactate to pyruvate. The chain is L-lactate dehydrogenase from Streptococcus equinus (Streptococcus bovis).